Here is a 257-residue protein sequence, read N- to C-terminus: Phosphate import ATP-binding protein PstB (257 aa).

The 242-residue stretch at 11-252 folds into the ABC transporter domain; it reads FNISRLYLYI…PKNELTEKYV (242 aa). 43–50 is a binding site for ATP; that stretch reads GPSGSGKS.

It belongs to the ABC transporter superfamily. Phosphate importer (TC 3.A.1.7) family. The complex is composed of two ATP-binding proteins (PstB), two transmembrane proteins (PstC and PstA) and a solute-binding protein (PstS).

The protein localises to the cell membrane. It catalyses the reaction phosphate(out) + ATP + H2O = ADP + 2 phosphate(in) + H(+). Part of the ABC transporter complex PstSACB involved in phosphate import. Responsible for energy coupling to the transport system. The protein is Phosphate import ATP-binding protein PstB of Saccharolobus solfataricus (strain ATCC 35092 / DSM 1617 / JCM 11322 / P2) (Sulfolobus solfataricus).